The chain runs to 384 residues: Bifunctional enzyme IspD/IspF (384 aa).

Positions 1-226 (MAKTVVLVVA…RCLFDGPGEV (226 aa)) are 2-C-methyl-D-erythritol 4-phosphate cytidylyltransferase. The tract at residues 227-384 (RSASGYDVHR…QAMASVWLPR (158 aa)) is 2-C-methyl-D-erythritol 2,4-cyclodiphosphate synthase. Residues D233 and H235 each contribute to the a divalent metal cation site. 4-CDP-2-C-methyl-D-erythritol 2-phosphate is bound by residues 233–235 (DVH) and 260–261 (HS). H268 contacts a divalent metal cation. Residues 282 to 284 (DIG), 358 to 361 (TTTE), F365, and R368 each bind 4-CDP-2-C-methyl-D-erythritol 2-phosphate.

It in the N-terminal section; belongs to the IspD/TarI cytidylyltransferase family. IspD subfamily. This sequence in the C-terminal section; belongs to the IspF family. Requires a divalent metal cation as cofactor.

The enzyme catalyses 2-C-methyl-D-erythritol 4-phosphate + CTP + H(+) = 4-CDP-2-C-methyl-D-erythritol + diphosphate. The catalysed reaction is 4-CDP-2-C-methyl-D-erythritol 2-phosphate = 2-C-methyl-D-erythritol 2,4-cyclic diphosphate + CMP. The protein operates within isoprenoid biosynthesis; isopentenyl diphosphate biosynthesis via DXP pathway; isopentenyl diphosphate from 1-deoxy-D-xylulose 5-phosphate: step 2/6. It functions in the pathway isoprenoid biosynthesis; isopentenyl diphosphate biosynthesis via DXP pathway; isopentenyl diphosphate from 1-deoxy-D-xylulose 5-phosphate: step 4/6. In terms of biological role, bifunctional enzyme that catalyzes the formation of 4-diphosphocytidyl-2-C-methyl-D-erythritol from CTP and 2-C-methyl-D-erythritol 4-phosphate (MEP) (IspD), and catalyzes the conversion of 4-diphosphocytidyl-2-C-methyl-D-erythritol 2-phosphate (CDP-ME2P) to 2-C-methyl-D-erythritol 2,4-cyclodiphosphate (ME-CPP) with a corresponding release of cytidine 5-monophosphate (CMP) (IspF). This chain is Bifunctional enzyme IspD/IspF, found in Paramagnetospirillum magneticum (strain ATCC 700264 / AMB-1) (Magnetospirillum magneticum).